Here is a 336-residue protein sequence, read N- to C-terminus: Aspartate--ammonia ligase (336 aa).

This sequence belongs to the class-II aminoacyl-tRNA synthetase family. AsnA subfamily.

It is found in the cytoplasm. It catalyses the reaction L-aspartate + NH4(+) + ATP = L-asparagine + AMP + diphosphate + H(+). Its pathway is amino-acid biosynthesis; L-asparagine biosynthesis; L-asparagine from L-aspartate (ammonia route): step 1/1. The sequence is that of Aspartate--ammonia ligase from Clostridium perfringens (strain ATCC 13124 / DSM 756 / JCM 1290 / NCIMB 6125 / NCTC 8237 / Type A).